The following is a 1103-amino-acid chain: Bifunctional cytochrome P450/NADPH--P450 reductase (1103 aa).

The segment at M1–A491 is cytochrome P450. C415 contacts heme. Positions G492–A1103 are NADPH--P450 reductase. The region spanning M508–F649 is the Flavodoxin-like domain. Residues S514 to C519, S561 to G564, C596, and T604 each bind FMN. An FAD-binding FR-type domain is found at L685–P924.

This sequence in the N-terminal section; belongs to the cytochrome P450 family. The cofactor is heme. Requires FAD as cofactor. FMN is required as a cofactor.

The catalysed reaction is 2 oxidized [cytochrome P450] + NADPH = 2 reduced [cytochrome P450] + NADP(+) + H(+). It carries out the reaction an organic molecule + reduced [NADPH--hemoprotein reductase] + O2 = an alcohol + oxidized [NADPH--hemoprotein reductase] + H2O + H(+). In terms of biological role, functions as a fatty acid monooxygenase. Also displays a NADPH-dependent reductase activity in the C-terminal domain, which allows electron transfer from NADPH to the heme iron of the cytochrome P450 N-terminal domain. The chain is Bifunctional cytochrome P450/NADPH--P450 reductase from Aspergillus oryzae (strain ATCC 42149 / RIB 40) (Yellow koji mold).